Consider the following 182-residue polypeptide: Putative adenylate kinase (182 aa).

ATP-binding residues include G10, G12, K13, T14, and S15. The NMP stretch occupies residues 30-53 (HLNEMIKEEHLYTEVDEVRDAVIA). The segment at 104–114 (ARGYSEEKIRE) is LID. 2 residues coordinate ATP: R105 and K143.

This sequence belongs to the adenylate kinase family. AK6 subfamily. As to quaternary structure, interacts with uS11. Not a structural component of 40S pre-ribosomes, but transiently interacts with them by binding to uS11.

The enzyme catalyses AMP + ATP = 2 ADP. It carries out the reaction ATP + H2O = ADP + phosphate + H(+). Its function is as follows. Broad-specificity nucleoside monophosphate (NMP) kinase that catalyzes the reversible transfer of the terminal phosphate group between nucleoside triphosphates and monophosphates. Also has ATPase activity. Involved in the late maturation steps of the 30S ribosomal particles, specifically 16S rRNA maturation. While NMP activity is not required for ribosome maturation, ATPase activity is. Associates transiently with small ribosomal subunit protein uS11. ATP hydrolysis breaks the interaction with uS11. May temporarily remove uS11 from the ribosome to enable a conformational change of the ribosomal RNA that is needed for the final maturation step of the small ribosomal subunit. This Methanosarcina barkeri (strain Fusaro / DSM 804) protein is Putative adenylate kinase.